The following is a 255-amino-acid chain: Small ribosomal subunit protein uS10m (255 aa).

The N-terminal 32 residues, 1–32, are a transit peptide targeting the mitochondrion; sequence MALPAARSALSARAFIRPAAALNAAASSSRYL. Disordered regions lie at residues 30 to 52 and 220 to 255; these read RYLS…NSET and SEGE…AKSS. A compositionally biased stretch (basic and acidic residues) spans 236 to 255; it reads DAAREEKPAEKLKEEEAKSS.

The protein belongs to the universal ribosomal protein uS10 family. In terms of assembly, part of the mitochondrial small ribosomal subunit.

It localises to the mitochondrion. In terms of biological role, involved in mitochondrial genome encoded proteins translation. Involved in the binding of tRNA to the ribosomes. The polypeptide is Small ribosomal subunit protein uS10m (RSM10) (Cryptococcus neoformans var. neoformans serotype D (strain B-3501A) (Filobasidiella neoformans)).